Here is a 321-residue protein sequence, read N- to C-terminus: Gap junction delta-2 protein (321 aa).

At 1 to 19 (MGEWTILERLLEAAVQQHS) the chain is on the cytoplasmic side. Residues 20–42 (TMIGRILLTVVVIFRILIVAIVG) traverse the membrane as a helical segment. Residues 43–75 (ETVYDDEQTMFVCNTLQPGCNQACYDRAFPISH) are Extracellular-facing. The chain crosses the membrane as a helical span at residues 76-98 (IRYWVFQIIMVCTPSLCFITYSV). Topologically, residues 99-197 (HQSAKQRERR…KLRRQEGISR (99 aa)) are cytoplasmic. The disordered stretch occupies residues 117–141 (DRDPPESMGGPGGTGGGGSGGGKRE). A compositionally biased stretch (gly residues) spans 125–137 (GGPGGTGGGGSGG). The chain crosses the membrane as a helical span at residues 198-220 (FYIIQVVFRNALEIGFLVGQYFL). Over 221–252 (YGFSVPGLYECDRYPCIKEVECYVSRPTEKTV) the chain is Extracellular. A helical membrane pass occupies residues 253 to 275 (FLVFMFAVSGICVVLNLAELNHL). Over 276 to 321 (GWRKIKLAVRGAQAKRKSVYEIRNKDLPRVSVPNFGRTQSSDSAYV) the chain is Cytoplasmic.

Belongs to the connexin family. Delta-type subfamily. In terms of assembly, a connexon is composed of a hexamer of connexins.

Its subcellular location is the cell membrane. The protein resides in the cell junction. The protein localises to the gap junction. In terms of biological role, one gap junction consists of a cluster of closely packed pairs of transmembrane channels, the connexons, through which materials of low MW diffuse from one cell to a neighboring cell. The polypeptide is Gap junction delta-2 protein (GJD2) (Bos taurus (Bovine)).